Reading from the N-terminus, the 208-residue chain is Putative ribosomal protein uS2-like (208 aa).

This sequence belongs to the universal ribosomal protein uS2 family.

The protein localises to the plastid. It localises to the chloroplast. This Chlamydomonas reinhardtii (Chlamydomonas smithii) protein is Putative ribosomal protein uS2-like (rps2-2).